The primary structure comprises 131 residues: Small ribosomal subunit protein uS8 (131 aa).

The protein belongs to the universal ribosomal protein uS8 family. Part of the 30S ribosomal subunit. Contacts proteins S5 and S12.

Its function is as follows. One of the primary rRNA binding proteins, it binds directly to 16S rRNA central domain where it helps coordinate assembly of the platform of the 30S subunit. This chain is Small ribosomal subunit protein uS8, found in Nitrosospira multiformis (strain ATCC 25196 / NCIMB 11849 / C 71).